The chain runs to 95 residues: Large ribosomal subunit protein bL25 (95 aa).

It belongs to the bacterial ribosomal protein bL25 family. Part of the 50S ribosomal subunit; part of the 5S rRNA/L5/L18/L25 subcomplex. Contacts the 5S rRNA. Binds to the 5S rRNA independently of L5 and L18.

This is one of the proteins that binds to the 5S RNA in the ribosome where it forms part of the central protuberance. This chain is Large ribosomal subunit protein bL25, found in Shewanella pealeana (strain ATCC 700345 / ANG-SQ1).